The primary structure comprises 179 residues: UPF0398 protein SSU05_0416 (179 aa).

It belongs to the UPF0398 family.

The polypeptide is UPF0398 protein SSU05_0416 (Streptococcus suis (strain 05ZYH33)).